The sequence spans 156 residues: 1-methylthio-D-xylulose 5-phosphate methylsulfurylase (156 aa).

Positions 55–122 (YFEVGPGGHS…ADEALGFLCM (68 aa)) constitute a Cupin type-2 domain. Residues Glu67, His69, His73, and His107 each coordinate Mn(2+). Residue Cys121 is part of the active site.

It carries out the reaction S-methyl-1-thio-D-xylulose 5-phosphate + glutathione = S-(methylsulfanyl)glutathione + 1-deoxy-D-xylulose 5-phosphate. The enzyme catalyses S-(methylsulfanyl)glutathione + AH2 = methanethiol + glutathione + A. It participates in amino-acid biosynthesis; L-methionine biosynthesis via salvage pathway. The protein operates within metabolic intermediate biosynthesis; 1-deoxy-D-xylulose 5-phosphate biosynthesis. Functionally, catalyzes the formation of S-(methylsulfanyl)glutathione and 1-deoxy-D-xylulose 5-phosphate (DXP) from 1-methylthioxylulose 5-phosphate (MTXu-5P). The S-(methylsulfanyl)glutathione is reductively cleaved to relase methanethiol in a second reaction. Involved in the MTA-isoprenoid shunt of the methionine salvage pathway. The protein is 1-methylthio-D-xylulose 5-phosphate methylsulfurylase of Rhodospirillum rubrum (strain ATCC 11170 / ATH 1.1.1 / DSM 467 / LMG 4362 / NCIMB 8255 / S1).